Reading from the N-terminus, the 114-residue chain is Nucleoid-associated protein CKL_3826 (114 aa).

Belongs to the YbaB/EbfC family. As to quaternary structure, homodimer.

Its subcellular location is the cytoplasm. It localises to the nucleoid. Functionally, binds to DNA and alters its conformation. May be involved in regulation of gene expression, nucleoid organization and DNA protection. In Clostridium kluyveri (strain ATCC 8527 / DSM 555 / NBRC 12016 / NCIMB 10680 / K1), this protein is Nucleoid-associated protein CKL_3826.